The chain runs to 821 residues: MIMDNFDSPFQYNRPEMTVEAIKKSIVYKLIFLIGRSPREASQRDWLNATLHAVRDLVTEGWITTARQTRAEDSRRVYYLSMEFLIGRTLSNAMIAEGIYGLAQEALSELNVDLEEVLEKEVDPGLGNGGLGRLAACFMDSIATLGLPGMGYGIRYEYGMFRQKIENGQQVERPDAWLEKGAPWEFIRPSKRFTVEFGGNIHFEGKKCIWQDTEKVTALAYDQMIPGYQNNSAATLRLWSAHAGEVFNLADFNRGEHLAALEEHSANKNLSRVLYPDDSTWNGRELRLRQEYFLVSASLQDILRRHKRTHNSLENLADKVAIHLNDTHPALAIPELMRILVDDEGFEWKKAWEMTRNIFSYTCHTLMSEALETWPVEMMAKILPRHLQMIFEINDHFLEYVRTYVTTDNDFIRRVSLIEEGYQRKVRMGWLSVVGSHKINGVAEIHSDLMVTSTFADFARIFPERFTNVTNGITPRRWLAVANPQLAALFDKYIGSEWRCDLSQIEKLKPFAQEKAFKEAVADIKFANKVKLAEYVKSELGVELDPHALFDVQVKRIHEYKRQMLNVLHIIARYNEMLTNPEKDWQPRVFILAGKAASAYYAAKQTIHLINDVANVINNDERLKGRLKVVFIPNYSVSLAQLIIPAADISEQISLAGTEASGTSNMKFALNGALTLGTLDGANVEILENVGEDNIFIFGNTVEQVEQLRREGYRSFEYYQNDAQLRTVVDQIIEGKFSPEDPQRYHQLLQGLQYHDYYQAFADFRSYVETQKAVDEKYKQRDQWIESTIQNIVNMGFFSSDRTIKEYAERIWKVEPVQLGD.

K667 carries the post-translational modification N6-(pyridoxal phosphate)lysine.

It belongs to the glycogen phosphorylase family. Pyridoxal 5'-phosphate serves as cofactor.

The catalysed reaction is [(1-&gt;4)-alpha-D-glucosyl](n) + phosphate = [(1-&gt;4)-alpha-D-glucosyl](n-1) + alpha-D-glucose 1-phosphate. In terms of biological role, phosphorylase is an important allosteric enzyme in carbohydrate metabolism. Enzymes from different sources differ in their regulatory mechanisms and in their natural substrates. However, all known phosphorylases share catalytic and structural properties. The protein is Glycogen phosphorylase (glgP) of Haemophilus influenzae (strain ATCC 51907 / DSM 11121 / KW20 / Rd).